The primary structure comprises 258 residues: MTKLGIHGGSGKMGTMIYECAQNFTNIEISAIYSIEPLKYSPNCIVTNDLQKLFENCDAVIDFTIKDGAIALLNYAKSHPKPICMGTTALGSEGEALLKECGKKMPVIYATNMSLGVAVLNSLTAQASKILRDFDCEIVEMHHRHKKDAPSGTAMTLAKTVANARGLDLEKVRISGRDGMIGERKKDEIAVMSLRGGDIVGRHSVGFYNDGEFIELNHTATSRATFANGAIKAALWVINQENGLYDINDCLGIKKCVR.

NAD(+)-binding positions include 8-13 (GGSGKM), 86-88 (GTT), and 110-113 (ATNM). His-142 serves as the catalytic Proton donor/acceptor. His-143 lines the (S)-2,3,4,5-tetrahydrodipicolinate pocket. Lys-146 (proton donor) is an active-site residue. 152-153 (GT) serves as a coordination point for (S)-2,3,4,5-tetrahydrodipicolinate.

Belongs to the DapB family.

It is found in the cytoplasm. The enzyme catalyses (S)-2,3,4,5-tetrahydrodipicolinate + NAD(+) + H2O = (2S,4S)-4-hydroxy-2,3,4,5-tetrahydrodipicolinate + NADH + H(+). It catalyses the reaction (S)-2,3,4,5-tetrahydrodipicolinate + NADP(+) + H2O = (2S,4S)-4-hydroxy-2,3,4,5-tetrahydrodipicolinate + NADPH + H(+). The protein operates within amino-acid biosynthesis; L-lysine biosynthesis via DAP pathway; (S)-tetrahydrodipicolinate from L-aspartate: step 4/4. Its function is as follows. Catalyzes the conversion of 4-hydroxy-tetrahydrodipicolinate (HTPA) to tetrahydrodipicolinate. The protein is 4-hydroxy-tetrahydrodipicolinate reductase of Campylobacter hominis (strain ATCC BAA-381 / DSM 21671 / CCUG 45161 / LMG 19568 / NCTC 13146 / CH001A).